The sequence spans 184 residues: Large ribosomal subunit protein eL18 (184 aa).

This sequence belongs to the eukaryotic ribosomal protein eL18 family.

Its subcellular location is the cytoplasm. The sequence is that of Large ribosomal subunit protein eL18 (RPL18) from Theileria parva (East coast fever infection agent).